The following is a 184-amino-acid chain: Thiosulfate dehydrogenase [quinone] large subunit (184 aa).

4 consecutive transmembrane segments (helical) span residues 21–38 (LFPV…GGLR), 86–106 (FLTV…IGLL), 109–129 (LAAL…WLGS), and 137–157 (IGAL…GRVW).

In terms of assembly, heterodimer of a large and a small subunit in a 2:2 stoichiometry. TQO may associate with the terminal oxidase formed by doxBCE.

The protein localises to the cell membrane. The catalysed reaction is 6-decylubiquinone + 2 thiosulfate = 6-decylubiquinol + tetrathionate. Its activity is regulated as follows. Inhibited by sulfite, metabisulfite and dithonite. Its function is as follows. TQO plays a role in sulfur oxidation and is proposed to couple sulfur oxidation to dioxygen reduction; caldariellaquinone or sulfolobus quinone seem to serve to transfer electrons to the electron transport chain terminal oxidase formed by DoxBCE. This is Thiosulfate dehydrogenase [quinone] large subunit (doxD) from Acidianus ambivalens (Desulfurolobus ambivalens).